The primary structure comprises 609 residues: Elongation factor 4 (609 aa).

Residues 11 to 193 form the tr-type G domain; the sequence is SRIRNFSIIA…QIVEKVPAPS (183 aa). GTP contacts are provided by residues 23 to 28 and 140 to 143; these read DHGKST and NKID.

Belongs to the TRAFAC class translation factor GTPase superfamily. Classic translation factor GTPase family. LepA subfamily.

Its subcellular location is the cell membrane. The catalysed reaction is GTP + H2O = GDP + phosphate + H(+). Functionally, required for accurate and efficient protein synthesis under certain stress conditions. May act as a fidelity factor of the translation reaction, by catalyzing a one-codon backward translocation of tRNAs on improperly translocated ribosomes. Back-translocation proceeds from a post-translocation (POST) complex to a pre-translocation (PRE) complex, thus giving elongation factor G a second chance to translocate the tRNAs correctly. Binds to ribosomes in a GTP-dependent manner. The protein is Elongation factor 4 of Halalkalibacterium halodurans (strain ATCC BAA-125 / DSM 18197 / FERM 7344 / JCM 9153 / C-125) (Bacillus halodurans).